The primary structure comprises 371 residues: Partitioning defective 6 homolog beta (371 aa).

A phosphoserine mark is found at Ser-10 and Ser-11. Residues 16-96 (TMEVKSKFGA…PLLRIFIQKK (81 aa)) enclose the PB1 domain. The segment at 126–253 (RKKPHIVISM…ITVRPANQRN (128 aa)) is interaction with PARD3 and CDC42. Positions 133 to 150 (ISMPQDFRPVSSIIDVDI) constitute a Pseudo-CRIB domain. Residues 157-250 (RVRLYKYGTE…NLIITVRPAN (94 aa)) form the PDZ domain. 2 disordered regions span residues 253 to 273 (NNVVRNSRTSGSSSQSTDNSL) and 326 to 371 (FESG…IITL). Over residues 326–340 (FESGQNGFSPPQDTS) the composition is skewed to polar residues. Basic and acidic residues predominate over residues 352-363 (LESRAPDQKLLE).

This sequence belongs to the PAR6 family. Interacts with PARD3. Interacts with GTP-bound forms of CDC42, RHOQ/TC10 and RAC1. Interacts with the N-terminal part of PRKCI and PRKCZ. Part of a complex with PARD3, CDC42 or RAC1 and PRKCI or PRKCZ. Part of a complex with LLGL1 and PRKCI. Interacts with ALS2CR19. Interacts with ECT2. Interacts with PALS1. Expressed in pancreas and in both adult and fetal kidney. Weakly expressed in placenta and lung. Not expressed in other tissues.

Its subcellular location is the cytoplasm. The protein resides in the cell membrane. It localises to the cell junction. It is found in the tight junction. In terms of biological role, adapter protein involved in asymmetrical cell division and cell polarization processes. Probably involved in formation of epithelial tight junctions. Association with PARD3 may prevent the interaction of PARD3 with F11R/JAM1, thereby preventing tight junction assembly. The PARD6-PARD3 complex links GTP-bound Rho small GTPases to atypical protein kinase C proteins. This is Partitioning defective 6 homolog beta (Pard6b) from Mus musculus (Mouse).